A 455-amino-acid chain; its full sequence is Probable glucarate dehydratase (455 aa).

Substrate-binding residues include histidine 42, threonine 113, tyrosine 160, and lysine 215. The active-site Proton acceptor is the lysine 217. Residues aspartate 245, glutamate 276, and asparagine 299 each contribute to the Mg(2+) site. A substrate-binding site is contributed by 245-247 (DPN). Substrate is bound by residues asparagine 299, 349–351 (HSN), histidine 378, and arginine 431. Histidine 349 acts as the Proton acceptor in catalysis.

It belongs to the mandelate racemase/muconate lactonizing enzyme family. GlucD subfamily. It depends on Mg(2+) as a cofactor.

It catalyses the reaction D-glucarate = 5-dehydro-4-deoxy-D-glucarate + H2O. Its pathway is carbohydrate acid metabolism; D-glucarate degradation; 2,5-dioxopentanoate from D-glucarate: step 1/2. In terms of biological role, catalyzes the dehydration of glucarate to 5-keto-4-deoxy-D-glucarate (5-kdGluc). This is Probable glucarate dehydratase (gudD) from Bacillus subtilis (strain 168).